The primary structure comprises 43 residues: LTLDRASDDTDVAAEIMSGLIALAIDSCCSDSDCNANHPDMCS.

Residues Leu-1–Asp-26 constitute a propeptide that is removed on maturation. 2 disulfide bridges follow: Cys-28-Cys-34 and Cys-29-Cys-42. The segment at Ser-30 to Ser-32 is lacks the Ser-Xaa-Pro motif that is crucial for potent interaction with nAChR.

It belongs to the conotoxin A superfamily. As to expression, expressed by the venom duct.

Its subcellular location is the secreted. Alpha-conotoxins act on postsynaptic membranes, they bind to the nicotinic acetylcholine receptors (nAChR) and thus inhibit them. Has possibly a distinct nAChR binding mode from other alpha-conotoxins, due to a different three residue motif (lacks the Ser-Xaa-Pro motif). This is Alpha-conotoxin-like Leo-A1 from Conus leopardus (Leopard cone).